A 725-amino-acid polypeptide reads, in one-letter code: Homeobox protein unc-62 (725 aa).

The MEIS N-terminal domain occupies 133 to 218 (SSDVCSSASF…PLDIVGDERA (86 aa)). 6 disordered regions span residues 214–258 (GDER…PYEP), 295–317 (SSSSSQPQPGDHPLANGGTLHST), 329–359 (VSSPSTCSSGGLRQDSTPLSGETPMANGNSM), 386–419 (SLHQHHLHHPHHFPHHQLQPPAHHQDFLLPPPPQ), 491–555 (VKME…KRKV), and 615–661 (IDQN…PDPT). Residues 219–239 (SSSQPPMSPGSMGHHGHSGSP) show a composition bias toward low complexity. Over residues 388–400 (HQHHLHHPHHFPH) the composition is skewed to basic residues. Over residues 498–508 (SVSSSKSGGKK) the composition is skewed to low complexity. Residues 541 to 550 (LSDSANGSQN) are compositionally biased toward polar residues. A DNA-binding region (homeobox; TALE-type) is located at residues 552–614 (KRKVPKVFSK…NARRRIVQPM (63 aa)).

Belongs to the TALE/MEIS homeobox family.

It is found in the nucleus. In terms of biological role, acts redundantly with ceh-20 and ceh-40 to perform overlapping roles during embryogenesis. Required for postembryonic development of the ectoderm, including the Q, V and P cell lineages, playing a crucial role in ensuring that these cells and their descendants undergo their invariant patterns of cell division, migration, fusion and morphogenesis. Has a role in the mig-13 pathway to promote anterior migration of neuroblasts in the Q lineage. Required for multiple roles in regulating vulva development. This Caenorhabditis briggsae protein is Homeobox protein unc-62 (unc-62).